The sequence spans 405 residues: S-adenosylmethionine synthase (405 aa).

Position 141–146 (141–146 (GQGSVD)) interacts with ATP.

This sequence belongs to the AdoMet synthase 2 family. It depends on Mg(2+) as a cofactor.

The catalysed reaction is L-methionine + ATP + H2O = S-adenosyl-L-methionine + phosphate + diphosphate. The protein operates within amino-acid biosynthesis; S-adenosyl-L-methionine biosynthesis; S-adenosyl-L-methionine from L-methionine: step 1/1. In terms of biological role, catalyzes the formation of S-adenosylmethionine from methionine and ATP. In Methanococcus maripaludis (Methanococcus deltae), this protein is S-adenosylmethionine synthase.